The following is a 320-amino-acid chain: ATP-dependent 6-phosphofructokinase (320 aa).

Gly12 contacts ATP. ADP-binding positions include 22 to 26 (RGVVR) and 55 to 60 (RYSVSD). ATP is bound by residues 73 to 74 (RF) and 103 to 106 (GDGS). Asp104 lines the Mg(2+) pocket. 126-128 (TID) serves as a coordination point for substrate. Asp128 functions as the Proton acceptor in the catalytic mechanism. Residue Arg155 participates in ADP binding. Residues Arg163 and 170–172 (MGR) contribute to the substrate site. Residues 186 to 188 (GCE), Lys212, and 214 to 216 (KKH) each bind ADP. Residues Glu223, Arg244, and 250-253 (HIQR) contribute to the substrate site.

It belongs to the phosphofructokinase type A (PFKA) family. ATP-dependent PFK group I subfamily. Prokaryotic clade 'B1' sub-subfamily. In terms of assembly, homotetramer. It depends on Mg(2+) as a cofactor.

Its subcellular location is the cytoplasm. The enzyme catalyses beta-D-fructose 6-phosphate + ATP = beta-D-fructose 1,6-bisphosphate + ADP + H(+). It participates in carbohydrate degradation; glycolysis; D-glyceraldehyde 3-phosphate and glycerone phosphate from D-glucose: step 3/4. Its activity is regulated as follows. Allosterically activated by ADP and other diphosphonucleosides, and allosterically inhibited by phosphoenolpyruvate. Functionally, catalyzes the phosphorylation of D-fructose 6-phosphate to fructose 1,6-bisphosphate by ATP, the first committing step of glycolysis. The sequence is that of ATP-dependent 6-phosphofructokinase from Buchnera aphidicola subsp. Baizongia pistaciae (strain Bp).